We begin with the raw amino-acid sequence, 322 residues long: Putative DNA-directed RNA polymerase subunit alpha-like 2 (322 aa).

Positions 1-232 (MSNPNNGAEW…GLLSLVFQAE (232 aa)) are alpha N-terminal domain (alpha-NTD). Positions 280–322 (EGPVTDEEGDSIDPTFTPVQKWDITMNSYQYSGETFQGLLSRF) are alpha C-terminal domain (alpha-CTD).

This sequence belongs to the RNA polymerase alpha chain family. In plastids the minimal PEP RNA polymerase catalytic core is composed of four subunits: alpha, beta, beta', and beta''. When a (nuclear-encoded) sigma factor is associated with the core the holoenzyme is formed, which can initiate transcription.

The protein localises to the plastid. The protein resides in the chloroplast. The catalysed reaction is RNA(n) + a ribonucleoside 5'-triphosphate = RNA(n+1) + diphosphate. In terms of biological role, DNA-dependent RNA polymerase catalyzes the transcription of DNA into RNA using the four ribonucleoside triphosphates as substrates. The chain is Putative DNA-directed RNA polymerase subunit alpha-like 2 (rpoAL2-A) from Pelargonium hortorum (Common geranium).